Reading from the N-terminus, the 357-residue chain is Chorismate synthase (357 aa).

Residue arginine 48 coordinates NADP(+). Residues arginine 125 to serine 127, asparagine 238 to alanine 239, glycine 282, lysine 297 to serine 301, and arginine 323 contribute to the FMN site.

It belongs to the chorismate synthase family. As to quaternary structure, homotetramer. FMNH2 serves as cofactor.

The catalysed reaction is 5-O-(1-carboxyvinyl)-3-phosphoshikimate = chorismate + phosphate. Its pathway is metabolic intermediate biosynthesis; chorismate biosynthesis; chorismate from D-erythrose 4-phosphate and phosphoenolpyruvate: step 7/7. Catalyzes the anti-1,4-elimination of the C-3 phosphate and the C-6 proR hydrogen from 5-enolpyruvylshikimate-3-phosphate (EPSP) to yield chorismate, which is the branch point compound that serves as the starting substrate for the three terminal pathways of aromatic amino acid biosynthesis. This reaction introduces a second double bond into the aromatic ring system. This is Chorismate synthase from Gluconacetobacter diazotrophicus (strain ATCC 49037 / DSM 5601 / CCUG 37298 / CIP 103539 / LMG 7603 / PAl5).